The sequence spans 396 residues: Elongation factor Tu (396 aa).

In terms of domain architecture, tr-type G spans Lys-11–Glu-205. The G1 stretch occupies residues Gly-20–Thr-27. Gly-20–Thr-27 is a GTP binding site. Thr-27 is a binding site for Mg(2+). The tract at residues Gly-61–Asn-65 is G2. Residues Asp-82–Gly-85 are G3. Residues Asp-82–His-86 and Asn-137–Asp-140 each bind GTP. Residues Asn-137–Asp-140 are G4. The G5 stretch occupies residues Ser-175–Leu-177.

It belongs to the TRAFAC class translation factor GTPase superfamily. Classic translation factor GTPase family. EF-Tu/EF-1A subfamily. As to quaternary structure, monomer.

It localises to the cytoplasm. It carries out the reaction GTP + H2O = GDP + phosphate + H(+). GTP hydrolase that promotes the GTP-dependent binding of aminoacyl-tRNA to the A-site of ribosomes during protein biosynthesis. This is Elongation factor Tu from Lactobacillus delbrueckii subsp. bulgaricus (strain ATCC 11842 / DSM 20081 / BCRC 10696 / JCM 1002 / NBRC 13953 / NCIMB 11778 / NCTC 12712 / WDCM 00102 / Lb 14).